The following is a 311-amino-acid chain: Methionyl-tRNA formyltransferase (311 aa).

109-112 serves as a coordination point for (6S)-5,6,7,8-tetrahydrofolate; sequence SLLP.

Belongs to the Fmt family.

It catalyses the reaction L-methionyl-tRNA(fMet) + (6R)-10-formyltetrahydrofolate = N-formyl-L-methionyl-tRNA(fMet) + (6S)-5,6,7,8-tetrahydrofolate + H(+). Its function is as follows. Attaches a formyl group to the free amino group of methionyl-tRNA(fMet). The formyl group appears to play a dual role in the initiator identity of N-formylmethionyl-tRNA by promoting its recognition by IF2 and preventing the misappropriation of this tRNA by the elongation apparatus. The sequence is that of Methionyl-tRNA formyltransferase from Staphylococcus aureus (strain MW2).